The following is a 427-amino-acid chain: Trigger factor (427 aa).

A PPIase FKBP-type domain is found at 163-248 (GDTVILDFEG…LHEIKTKEVP (86 aa)).

Belongs to the FKBP-type PPIase family. Tig subfamily.

Its subcellular location is the cytoplasm. The catalysed reaction is [protein]-peptidylproline (omega=180) = [protein]-peptidylproline (omega=0). Its function is as follows. Involved in protein export. Acts as a chaperone by maintaining the newly synthesized protein in an open conformation. Functions as a peptidyl-prolyl cis-trans isomerase. This is Trigger factor from Listeria innocua serovar 6a (strain ATCC BAA-680 / CLIP 11262).